A 193-amino-acid chain; its full sequence is 3-isopropylmalate dehydratase small subunit (193 aa).

This sequence belongs to the LeuD family. LeuD type 1 subfamily. Heterodimer of LeuC and LeuD.

The enzyme catalyses (2R,3S)-3-isopropylmalate = (2S)-2-isopropylmalate. It participates in amino-acid biosynthesis; L-leucine biosynthesis; L-leucine from 3-methyl-2-oxobutanoate: step 2/4. In terms of biological role, catalyzes the isomerization between 2-isopropylmalate and 3-isopropylmalate, via the formation of 2-isopropylmaleate. In Bacillus cereus (strain ZK / E33L), this protein is 3-isopropylmalate dehydratase small subunit.